A 515-amino-acid chain; its full sequence is NAD(P)H-quinone oxidoreductase subunit 2 (515 aa).

Transmembrane regions (helical) follow at residues T14 to I34, W42 to W62, L79 to I99, L109 to G128, L132 to G151, L167 to L187, L206 to V226, P240 to I260, W274 to L294, M302 to T322, L330 to F350, L374 to G394, I396 to L416, and V462 to F482.

This sequence belongs to the complex I subunit 2 family. NDH-1 can be composed of about 15 different subunits; different subcomplexes with different compositions have been identified which probably have different functions.

It localises to the cellular thylakoid membrane. The catalysed reaction is a plastoquinone + NADH + (n+1) H(+)(in) = a plastoquinol + NAD(+) + n H(+)(out). It catalyses the reaction a plastoquinone + NADPH + (n+1) H(+)(in) = a plastoquinol + NADP(+) + n H(+)(out). In terms of biological role, NDH-1 shuttles electrons from an unknown electron donor, via FMN and iron-sulfur (Fe-S) centers, to quinones in the respiratory and/or the photosynthetic chain. The immediate electron acceptor for the enzyme in this species is believed to be plastoquinone. Couples the redox reaction to proton translocation, and thus conserves the redox energy in a proton gradient. Cyanobacterial NDH-1 also plays a role in inorganic carbon-concentration. In Thermosynechococcus vestitus (strain NIES-2133 / IAM M-273 / BP-1), this protein is NAD(P)H-quinone oxidoreductase subunit 2.